The chain runs to 828 residues: DNA topoisomerase 3 (828 aa).

A Toprim domain is found at 4 to 149 (RILNVAEKPS…KFEFYRAHFS (146 aa)). Residues 167–617 (NEKDSIAVDT…STIEKYKQLY (451 aa)) form the Topo IA-type catalytic domain. The active-site O-(5'-phospho-DNA)-tyrosine intermediate is the tyrosine 361. Positions 763–828 (QQQQQQQQQQ…SDRNNNNFIF (66 aa)) are disordered.

This sequence belongs to the type IA topoisomerase family.

It carries out the reaction ATP-independent breakage of single-stranded DNA, followed by passage and rejoining.. Functionally, releases the supercoiling and torsional tension of DNA introduced during the DNA replication and transcription by transiently cleaving and rejoining one strand of the DNA duplex. Introduces a single-strand break via transesterification at a target site in duplex DNA. The scissile phosphodiester is attacked by the catalytic tyrosine of the enzyme, resulting in the formation of a DNA-(5'-phosphotyrosyl)-enzyme intermediate and the expulsion of a 3'-OH DNA strand. The free DNA strand than undergoes passage around the unbroken strand thus removing DNA supercoils. Finally, in the religation step, the DNA 3'-OH attacks the covalent intermediate to expel the active-site tyrosine and restore the DNA phosphodiester backbone. The sequence is that of DNA topoisomerase 3 (top3) from Dictyostelium discoideum (Social amoeba).